Here is a 162-residue protein sequence, read N- to C-terminus: NADH-quinone oxidoreductase subunit I 2 (162 aa).

2 consecutive 4Fe-4S ferredoxin-type domains span residues 52-82 and 93-122; these read LRRY…IEAG and VRYD…EGPN. [4Fe-4S] cluster contacts are provided by C62, C65, C68, C72, C102, C105, C108, and C112.

It belongs to the complex I 23 kDa subunit family. As to quaternary structure, NDH-1 is composed of 14 different subunits. Subunits NuoA, H, J, K, L, M, N constitute the membrane sector of the complex. [4Fe-4S] cluster serves as cofactor.

It is found in the cell inner membrane. The catalysed reaction is a quinone + NADH + 5 H(+)(in) = a quinol + NAD(+) + 4 H(+)(out). Its function is as follows. NDH-1 shuttles electrons from NADH, via FMN and iron-sulfur (Fe-S) centers, to quinones in the respiratory chain. The immediate electron acceptor for the enzyme in this species is believed to be ubiquinone. Couples the redox reaction to proton translocation (for every two electrons transferred, four hydrogen ions are translocated across the cytoplasmic membrane), and thus conserves the redox energy in a proton gradient. The protein is NADH-quinone oxidoreductase subunit I 2 of Rhodopseudomonas palustris (strain BisB5).